The following is a 488-amino-acid chain: 3-octaprenyl-4-hydroxybenzoate carboxy-lyase (488 aa).

Mn(2+) is bound at residue Asn-172. Residues 175–177, 189–191, and 194–195 each bind prenylated FMN; these read IYR, RWL, and RG. Glu-238 is a Mn(2+) binding site. Asp-287 (proton donor) is an active-site residue.

The protein belongs to the UbiD family. Homohexamer. The cofactor is prenylated FMN. It depends on Mn(2+) as a cofactor.

The protein localises to the cell membrane. It carries out the reaction a 4-hydroxy-3-(all-trans-polyprenyl)benzoate + H(+) = a 2-(all-trans-polyprenyl)phenol + CO2. The protein operates within cofactor biosynthesis; ubiquinone biosynthesis. Catalyzes the decarboxylation of 3-octaprenyl-4-hydroxy benzoate to 2-octaprenylphenol, an intermediate step in ubiquinone biosynthesis. The polypeptide is 3-octaprenyl-4-hydroxybenzoate carboxy-lyase (Shewanella oneidensis (strain ATCC 700550 / JCM 31522 / CIP 106686 / LMG 19005 / NCIMB 14063 / MR-1)).